We begin with the raw amino-acid sequence, 503 residues long: Maturase K (503 aa).

This sequence belongs to the intron maturase 2 family. MatK subfamily.

It localises to the plastid. The protein resides in the chloroplast. Functionally, usually encoded in the trnK tRNA gene intron. Probably assists in splicing its own and other chloroplast group II introns. The protein is Maturase K of Kunzea baxteri (Scarlet kunzea).